Reading from the N-terminus, the 692-residue chain is Elongation factor G (692 aa).

Positions 8–282 (AKTRNIGIMA…AVIAYLPSPL (275 aa)) constitute a tr-type G domain. GTP contacts are provided by residues 17–24 (AHVDAGKT), 81–85 (DTPGH), and 135–138 (NKMD).

This sequence belongs to the TRAFAC class translation factor GTPase superfamily. Classic translation factor GTPase family. EF-G/EF-2 subfamily.

It is found in the cytoplasm. Its function is as follows. Catalyzes the GTP-dependent ribosomal translocation step during translation elongation. During this step, the ribosome changes from the pre-translocational (PRE) to the post-translocational (POST) state as the newly formed A-site-bound peptidyl-tRNA and P-site-bound deacylated tRNA move to the P and E sites, respectively. Catalyzes the coordinated movement of the two tRNA molecules, the mRNA and conformational changes in the ribosome. The sequence is that of Elongation factor G (fus) from Streptococcus pyogenes serotype M1.